We begin with the raw amino-acid sequence, 653 residues long: DNA ligase (653 aa).

Residues 32–36 (NFEYD) and 80–81 (SL) each bind NAD(+). The active-site N6-AMP-lysine intermediate is the Lys-104. 3 residues coordinate NAD(+): Arg-125, Glu-159, and Lys-297. The Zn(2+) site is built by Cys-386, Cys-389, Cys-406, and Cys-411. Residues 571 to 653 (GGSEKLKGLT…EEFIQLLNEA (83 aa)) enclose the BRCT domain.

This sequence belongs to the NAD-dependent DNA ligase family. LigA subfamily. Mg(2+) is required as a cofactor. Mn(2+) serves as cofactor.

The enzyme catalyses NAD(+) + (deoxyribonucleotide)n-3'-hydroxyl + 5'-phospho-(deoxyribonucleotide)m = (deoxyribonucleotide)n+m + AMP + beta-nicotinamide D-nucleotide.. Functionally, DNA ligase that catalyzes the formation of phosphodiester linkages between 5'-phosphoryl and 3'-hydroxyl groups in double-stranded DNA using NAD as a coenzyme and as the energy source for the reaction. It is essential for DNA replication and repair of damaged DNA. The chain is DNA ligase from Lachnoclostridium phytofermentans (strain ATCC 700394 / DSM 18823 / ISDg) (Clostridium phytofermentans).